Reading from the N-terminus, the 901-residue chain is HTH-type transcriptional regulator MalT (901 aa).

An ATP-binding site is contributed by 39–46 (SPAGYGKT). The HTH luxR-type domain maps to 829-894 (ELIRTSPLTQ…DAVQHAQQLL (66 aa)). Positions 853-872 (NEQIAGELDVAATTIKTHIR) form a DNA-binding region, H-T-H motif.

The protein belongs to the MalT family. As to quaternary structure, monomer in solution. Oligomerizes to an active state in the presence of the positive effectors ATP and maltotriose.

Its activity is regulated as follows. Activated by ATP and maltotriose, which are both required for DNA binding. Functionally, positively regulates the transcription of the maltose regulon whose gene products are responsible for uptake and catabolism of malto-oligosaccharides. Specifically binds to the promoter region of its target genes, recognizing a short DNA motif called the MalT box. The sequence is that of HTH-type transcriptional regulator MalT from Klebsiella pneumoniae subsp. pneumoniae (strain ATCC 700721 / MGH 78578).